A 94-amino-acid polypeptide reads, in one-letter code: Aspartyl/glutamyl-tRNA(Asn/Gln) amidotransferase subunit C (94 aa).

This sequence belongs to the GatC family. As to quaternary structure, heterotrimer of A, B and C subunits.

It catalyses the reaction L-glutamyl-tRNA(Gln) + L-glutamine + ATP + H2O = L-glutaminyl-tRNA(Gln) + L-glutamate + ADP + phosphate + H(+). The enzyme catalyses L-aspartyl-tRNA(Asn) + L-glutamine + ATP + H2O = L-asparaginyl-tRNA(Asn) + L-glutamate + ADP + phosphate + 2 H(+). Allows the formation of correctly charged Asn-tRNA(Asn) or Gln-tRNA(Gln) through the transamidation of misacylated Asp-tRNA(Asn) or Glu-tRNA(Gln) in organisms which lack either or both of asparaginyl-tRNA or glutaminyl-tRNA synthetases. The reaction takes place in the presence of glutamine and ATP through an activated phospho-Asp-tRNA(Asn) or phospho-Glu-tRNA(Gln). The polypeptide is Aspartyl/glutamyl-tRNA(Asn/Gln) amidotransferase subunit C (Nitratidesulfovibrio vulgaris (strain ATCC 29579 / DSM 644 / CCUG 34227 / NCIMB 8303 / VKM B-1760 / Hildenborough) (Desulfovibrio vulgaris)).